Consider the following 242-residue polypeptide: Venom redulysin 2 (242 aa).

The N-terminal stretch at 1 to 19 (MSKIWILLLLVGAVQFARG) is a signal peptide. A propeptide spanning residues 20 to 46 (FPALEEEQEDDVIDWPSFEYDLSDEER) is cleaved from the precursor.

It belongs to the redulysin-like family. Post-translationally, contains 5 disulfide bonds. Expressed by the venom gland (posterior main gland) (at protein level).

The protein localises to the secreted. Highly abundant protein that may be responsible for the observed disruption of sensory neuron membranes, since it is homologous to proteins such as trialysin, which forms pores in lipid bilayers. Probable insecticidal toxin. This chain is Venom redulysin 2, found in Platymeris rhadamanthus (Red spot assassin bug).